The sequence spans 547 residues: Serine beta-lactamase-like protein LACTB, mitochondrial (547 aa).

Residues Met1 to Leu115 constitute a mitochondrion transit peptide. Low complexity predominate over residues Gly62–Pro83. A disordered region spans residues Gly62–Pro96. Residue Ser164 is the Acyl-ester intermediate of the active site. Residues Lys283 and Lys284 each carry the N6-succinyllysine modification. An N6-acetyllysine mark is found at Lys297 and Lys342.

This sequence belongs to the peptidase S12 family. As to expression, expressed predominantly in skeletal muscle.

It localises to the mitochondrion. Its function is as follows. Mitochondrial serine protease that acts as a regulator of mitochondrial lipid metabolism. Acts by decreasing protein levels of PISD, a mitochondrial enzyme that converts phosphatidylserine (PtdSer) to phosphatidylethanolamine (PtdEtn), thereby affecting mitochondrial lipid metabolism. It is unclear whether it acts directly by mediating proteolysis of PISD or by mediating proteolysis of another lipid metabolism protein. Acts as a tumor suppressor that has the ability to inhibit proliferation of multiple types of breast cancer cells: probably by promoting decreased levels of PISD, thereby affecting mitochondrial lipid metabolism. The chain is Serine beta-lactamase-like protein LACTB, mitochondrial from Homo sapiens (Human).